The chain runs to 105 residues: Platelet factor 4 (105 aa).

An N-terminal signal peptide occupies residues 1-29 (MSAAAVFRGLRPSPELLLLGLLLLPAVVA). A glycan (O-linked (GalNAc...) threonine; partial) is linked at threonine 31. 2 cysteine pairs are disulfide-bonded: cysteine 44–cysteine 71 and cysteine 46–cysteine 87. Serine 61 bears the Phosphoserine mark. 96–102 (KKIIKKL) contributes to the heparin binding site.

The protein belongs to the intercrine alpha (chemokine CxC) family. Homotetramer. Interacts with TNFAIP6 (via Link domain). Interacts with CCR1. Interacts with CXCR3. Interacts with THBD; this interaction enhances generation of activated protein C. O-linked glycan consists of Gal-GalNAc disaccharide which is modified with sialic acid residues (microheterogeneity).

The protein localises to the secreted. In terms of biological role, chemokine released during platelet aggregation that plays a role in different biological processes including hematopoiesis, cell proliferation, differentiation, and activation. Acts via different functional receptors including CCR1, CXCR3A or CXCR3B. Upon interaction with CXCR3A receptor, induces activated T-lymphocytes migration mediated via downstream Ras/extracellular signal-regulated kinase (ERK) signaling. Neutralizes the anticoagulant effect of heparin by binding more strongly to heparin than to the chondroitin-4-sulfate chains of the carrier molecule. Plays a role in the inhibition of hematopoiesis and in the maintenance of hematopoietic stem cell (HSC) quiescence. Chemotactic for neutrophils and monocytes via CCR1. Inhibits endothelial cell proliferation. In cooperation with toll-like receptor 8/TLR8, induces chromatin remodeling and activates inflammatory gene expression via the TBK1-IRF5 axis. In addition, induces myofibroblast differentiation and collagen synthesis in different precursor cells, including endothelial cells, by stimulating endothelial-to-mesenchymal transition. Interacts with thrombomodulin/THBD to enhance the activation of protein C and thus potentiates its anticoagulant activity. The chain is Platelet factor 4 (Pf4) from Rattus norvegicus (Rat).